Here is a 24-residue protein sequence, read N- to C-terminus: Small ribosomal subunit protein uS19 (24 aa).

The disordered stretch occupies residues 1-24 (KLGEFSPTRTYRGHNKKDKKMQKK). The span at 11-24 (YRGHNKKDKKMQKK) shows a compositional bias: basic residues.

It belongs to the universal ribosomal protein uS19 family.

In terms of biological role, protein S19 forms a complex with S13 that binds strongly to the 16S ribosomal RNA. The protein is Small ribosomal subunit protein uS19 of Phytoplasma sp. (strain STRAWB2).